We begin with the raw amino-acid sequence, 259 residues long: Deoxyribose-phosphate aldolase (259 aa).

Aspartate 102 (proton donor/acceptor) is an active-site residue. Residue lysine 167 is the Schiff-base intermediate with acetaldehyde of the active site. The active-site Proton donor/acceptor is the lysine 201.

The protein belongs to the DeoC/FbaB aldolase family. DeoC type 2 subfamily.

The protein localises to the cytoplasm. The enzyme catalyses 2-deoxy-D-ribose 5-phosphate = D-glyceraldehyde 3-phosphate + acetaldehyde. It functions in the pathway carbohydrate degradation; 2-deoxy-D-ribose 1-phosphate degradation; D-glyceraldehyde 3-phosphate and acetaldehyde from 2-deoxy-alpha-D-ribose 1-phosphate: step 2/2. Catalyzes a reversible aldol reaction between acetaldehyde and D-glyceraldehyde 3-phosphate to generate 2-deoxy-D-ribose 5-phosphate. This Proteus mirabilis (strain HI4320) protein is Deoxyribose-phosphate aldolase.